Reading from the N-terminus, the 108-residue chain is Nascent polypeptide-associated complex protein (108 aa).

The region spanning 1–68 (MNPREIRRMM…LREVKKEVEQ (68 aa)) is the NAC-A/B domain.

The protein belongs to the NAC-alpha family. Homodimer. Interacts with the ribosome. Binds ribosomal RNA.

Its function is as follows. Contacts the emerging nascent chain on the ribosome. The polypeptide is Nascent polypeptide-associated complex protein (Picrophilus torridus (strain ATCC 700027 / DSM 9790 / JCM 10055 / NBRC 100828 / KAW 2/3)).